The primary structure comprises 215 residues: Large ribosomal subunit protein uL4 (215 aa).

Residues 46–72 (TAKSKNRAEVSGGGRKPWAQKGGGRAR) are disordered. Positions 56–71 (SGGGRKPWAQKGGGRA) are enriched in gly residues.

This sequence belongs to the universal ribosomal protein uL4 family. In terms of assembly, part of the 50S ribosomal subunit.

One of the primary rRNA binding proteins, this protein initially binds near the 5'-end of the 23S rRNA. It is important during the early stages of 50S assembly. It makes multiple contacts with different domains of the 23S rRNA in the assembled 50S subunit and ribosome. Its function is as follows. Forms part of the polypeptide exit tunnel. This is Large ribosomal subunit protein uL4 from Helicobacter pylori (strain Shi470).